We begin with the raw amino-acid sequence, 131 residues long: Small ribosomal subunit protein uS8 (131 aa).

Belongs to the universal ribosomal protein uS8 family. As to quaternary structure, part of the 30S ribosomal subunit. Contacts proteins S5 and S12.

Its function is as follows. One of the primary rRNA binding proteins, it binds directly to 16S rRNA central domain where it helps coordinate assembly of the platform of the 30S subunit. In Wolbachia pipientis subsp. Culex pipiens (strain wPip), this protein is Small ribosomal subunit protein uS8.